The primary structure comprises 239 residues: Glycerol-3-phosphate acyltransferase (239 aa).

6 helical membrane-spanning segments follow: residues 6–26 (AIAL…SVMF), 61–81 (FLVG…SFLI), 99–119 (YYLT…PLYF), 135–155 (LAIS…VTLI), 159–179 (VSLA…VPWL), and 199–219 (WYII…VFWL).

This sequence belongs to the PlsY family. In terms of assembly, probably interacts with PlsX.

The protein resides in the cell membrane. It carries out the reaction an acyl phosphate + sn-glycerol 3-phosphate = a 1-acyl-sn-glycero-3-phosphate + phosphate. It functions in the pathway lipid metabolism; phospholipid metabolism. Catalyzes the transfer of an acyl group from acyl-phosphate (acyl-PO(4)) to glycerol-3-phosphate (G3P) to form lysophosphatidic acid (LPA). This enzyme utilizes acyl-phosphate as fatty acyl donor, but not acyl-CoA or acyl-ACP. The sequence is that of Glycerol-3-phosphate acyltransferase from Mycoplasma pneumoniae (strain ATCC 29342 / M129 / Subtype 1) (Mycoplasmoides pneumoniae).